Here is a 210-residue protein sequence, read N- to C-terminus: Putative protein-lysine deacylase ABHD14B (210 aa).

N-acetylalanine is present on Ala-2. Phosphoserine is present on Ser-91. Active-site charge relay system residues include Ser-111, Asp-162, and His-188.

Belongs to the AB hydrolase superfamily. ABHD14 family. May interact with TAF1.

It is found in the cytoplasm. Its subcellular location is the nucleus. It catalyses the reaction L-lysyl-[protein] + acetyl-CoA = N(6)-acetyl-L-lysyl-[protein] + CoA + H(+). Its function is as follows. Acts as an atypical protein-lysine deacetylase in vitro. Catalyzes the deacetylation of lysine residues using CoA as substrate, generating acetyl-CoA and the free amine of protein-lysine residues. Additional experiments are however required to confirm the protein-lysine deacetylase activity in vivo. Has hydrolase activity towards various surrogate p-nitrophenyl (pNp) substrates, such as pNp-butyrate, pNp-acetate and pNp-octanoate in vitro, with a strong preference for pNp-acetate. May activate transcription. The sequence is that of Putative protein-lysine deacylase ABHD14B from Pongo abelii (Sumatran orangutan).